The sequence spans 274 residues: Nitrogenase iron protein (274 aa).

Glycine 8–serine 15 is an ATP binding site. Cysteine 94 provides a ligand contact to [4Fe-4S] cluster. The residue at position 97 (arginine 97) is an ADP-ribosylarginine; by dinitrogenase reductase ADP-ribosyltransferase. Cysteine 131 contacts [4Fe-4S] cluster.

This sequence belongs to the NifH/BchL/ChlL family. In terms of assembly, homodimer. It depends on [4Fe-4S] cluster as a cofactor. In terms of processing, the reversible ADP-ribosylation of Arg-97 inactivates the nitrogenase reductase and regulates nitrogenase activity.

The catalysed reaction is N2 + 8 reduced [2Fe-2S]-[ferredoxin] + 16 ATP + 16 H2O = H2 + 8 oxidized [2Fe-2S]-[ferredoxin] + 2 NH4(+) + 16 ADP + 16 phosphate + 6 H(+). Functionally, the key enzymatic reactions in nitrogen fixation are catalyzed by the nitrogenase complex, which has 2 components: the iron protein and the molybdenum-iron protein. The chain is Nitrogenase iron protein from Pelodictyon phaeoclathratiforme (strain DSM 5477 / BU-1).